Reading from the N-terminus, the 153-residue chain is T cell receptor delta constant (153 aa).

Residue Asn-14 is glycosylated (N-linked (GlcNAc...) asparagine). Residues Cys-20 and Cys-71 are joined by a disulfide bond. N-linked (GlcNAc...) asparagine glycosylation occurs at Asn-77. Residues 85–102 (FEVKTDSTDHVKPKETEN) show a composition bias toward basic and acidic residues. The disordered stretch occupies residues 85 to 112 (FEVKTDSTDHVKPKETENTKQPSKSCHK). Residues 130–152 (LGLRMLFAKTVAVNFLLTAKLFF) form a helical membrane-spanning segment.

Gamma-delta TR is a heterodimer composed of a gamma and delta chain; disulfide-linked. The gamma-delta TR is associated with the transmembrane signaling CD3 coreceptor proteins following the stoichiometry: a single gamma-delta TR heterodimer associates with one CD3D-CD3E heterodimer, one CD3G-CD3E heterodimer and one CD247 homodimer forming a stable octameric structure. Upon activation, gamma-delta TR complex associates with FCER1G to initiate intracellular signaling.

The protein resides in the cell membrane. Constant region of T cell receptor (TR) delta chain that participates in the antigen recognition. Gamma-delta TRs recognize a variety of self and foreign non-peptide antigens frequently expressed at the epithelial boundaries between the host and external environment, including endogenous lipids presented by MH-like protein CD1D and phosphoantigens presented by butyrophilin-like molecule BTN3A1. Upon antigen recognition induces rapid, innate-like immune responses involved in pathogen clearance and tissue repair. Binding of gamma-delta TR complex to antigen triggers phosphorylation of immunoreceptor tyrosine-based activation motifs (ITAMs) in the CD3 chains by the LCK and FYN kinases, allowing the recruitment, phosphorylation, and activation of ZAP70 that facilitates phosphorylation of the scaffolding proteins LCP2 and LAT. This lead to the formation of a supramolecular signalosome that recruits the phospholipase PLCG1, resulting in calcium mobilization and ERK activation, ultimately leading to T cell expansion and differentiation into effector cells. Gamma-delta TRs are produced through somatic rearrangement of a limited repertoire of variable (V), diversity (D), and joining (J) genes. The potential diversity of gamma-delta TRs is conferred by the unique ability to rearrange (D) genes in tandem and to utilize all three reading frames. The combinatorial diversity is considerably increased by the sequence exonuclease trimming and random nucleotide (N) region additions which occur during the V-(D)-J rearrangements. The polypeptide is T cell receptor delta constant (Homo sapiens (Human)).